The following is a 248-amino-acid chain: PF03932 family protein CutC (248 aa).

The protein belongs to the CutC family. In terms of assembly, homodimer.

It localises to the cytoplasm. The chain is PF03932 family protein CutC from Salmonella paratyphi B (strain ATCC BAA-1250 / SPB7).